The following is a 20-amino-acid chain: 54 kDa cell wall protein (20 aa).

Residues 1 to 20 (KVPVDDQFRRVNNGGATDTR) are disordered.

It is found in the secreted. The protein resides in the cell wall. This is 54 kDa cell wall protein from Arabidopsis thaliana (Mouse-ear cress).